A 622-amino-acid polypeptide reads, in one-letter code: Phosphatidylinositol 4-kinase gamma 6 (622 aa).

The region spanning 38-95 (RRVFVQTDTGCVLGVELDRNDNVHTVKKRLQIAFNFPTEESSLTFGDMVLKNDLSAVR) is the Ubiquitin-like; degenerate domain. The 302-residue stretch at 158–459 (GVEPIPVNGG…LTTEQDVLSP (302 aa)) folds into the PI3K/PI4K catalytic domain. Residues 164–170 (VNGGLGG) are G-loop. ATP is bound by residues 165-171 (NGGLGGA), Lys-186, and 277-280 (QKFV). A catalytic loop region spans residues 310–318 (LNTDRHGGN). The segment at 339-365 (PIDHGLCLPETLEDPYFEWIHWPQASI) is activation loop. Position 341 (Asp-341) interacts with ATP. The residue at position 565 (Ser-565) is a Phosphoserine.

It belongs to the PI3/PI4-kinase family. Type II PI4K subfamily.

It catalyses the reaction a 1,2-diacyl-sn-glycero-3-phospho-(1D-myo-inositol) + ATP = a 1,2-diacyl-sn-glycero-3-phospho-(1D-myo-inositol 4-phosphate) + ADP + H(+). The phosphorylation of phosphatidylinositol (PI) to PI4P is the first committed step in the generation of phosphatidylinositol 4,5-bisphosphate (PIP2), a precursor of the second messenger inositol 1,4,5-trisphosphate (InsP3). This chain is Phosphatidylinositol 4-kinase gamma 6 (PI4KG6), found in Arabidopsis thaliana (Mouse-ear cress).